A 129-amino-acid polypeptide reads, in one-letter code: D-ribose pyranase (129 aa).

Catalysis depends on histidine 20, which acts as the Proton donor. Substrate is bound by residues aspartate 28, histidine 96, and 118-120 (YAN).

It belongs to the RbsD / FucU family. RbsD subfamily. Homodecamer.

The protein localises to the cytoplasm. It carries out the reaction beta-D-ribopyranose = beta-D-ribofuranose. It functions in the pathway carbohydrate metabolism; D-ribose degradation; D-ribose 5-phosphate from beta-D-ribopyranose: step 1/2. Catalyzes the interconversion of beta-pyran and beta-furan forms of D-ribose. In Halalkalibacterium halodurans (strain ATCC BAA-125 / DSM 18197 / FERM 7344 / JCM 9153 / C-125) (Bacillus halodurans), this protein is D-ribose pyranase.